We begin with the raw amino-acid sequence, 71 residues long: Small ribosomal subunit protein bS21 (71 aa).

Belongs to the bacterial ribosomal protein bS21 family.

The sequence is that of Small ribosomal subunit protein bS21 from Wigglesworthia glossinidia brevipalpis.